A 291-amino-acid polypeptide reads, in one-letter code: Aspartate carbamoyltransferase catalytic subunit (291 aa).

Carbamoyl phosphate is bound by residues arginine 49 and threonine 50. Lysine 77 contacts L-aspartate. Positions 99, 127, and 130 each coordinate carbamoyl phosphate. Residues arginine 160 and arginine 210 each contribute to the L-aspartate site. Carbamoyl phosphate-binding residues include glycine 249 and proline 250.

It belongs to the aspartate/ornithine carbamoyltransferase superfamily. ATCase family. In terms of assembly, heterododecamer (2C3:3R2) of six catalytic PyrB chains organized as two trimers (C3), and six regulatory PyrI chains organized as three dimers (R2).

The enzyme catalyses carbamoyl phosphate + L-aspartate = N-carbamoyl-L-aspartate + phosphate + H(+). The protein operates within pyrimidine metabolism; UMP biosynthesis via de novo pathway; (S)-dihydroorotate from bicarbonate: step 2/3. Functionally, catalyzes the condensation of carbamoyl phosphate and aspartate to form carbamoyl aspartate and inorganic phosphate, the committed step in the de novo pyrimidine nucleotide biosynthesis pathway. The sequence is that of Aspartate carbamoyltransferase catalytic subunit from Sulfurimonas denitrificans (strain ATCC 33889 / DSM 1251) (Thiomicrospira denitrificans (strain ATCC 33889 / DSM 1251)).